A 345-amino-acid chain; its full sequence is Phosphoribosylformylglycinamidine cyclo-ligase (345 aa).

It belongs to the AIR synthase family.

The protein localises to the cytoplasm. It catalyses the reaction 2-formamido-N(1)-(5-O-phospho-beta-D-ribosyl)acetamidine + ATP = 5-amino-1-(5-phospho-beta-D-ribosyl)imidazole + ADP + phosphate + H(+). It functions in the pathway purine metabolism; IMP biosynthesis via de novo pathway; 5-amino-1-(5-phospho-D-ribosyl)imidazole from N(2)-formyl-N(1)-(5-phospho-D-ribosyl)glycinamide: step 2/2. The chain is Phosphoribosylformylglycinamidine cyclo-ligase from Shewanella loihica (strain ATCC BAA-1088 / PV-4).